The following is a 367-amino-acid chain: MSKRLRVEDDFNPVYPYGYARNQNIPFLTPPFVSSDGFQNFPPGVLSLKLADPIAIANGNVSLKMGGGLTLQEGTGNLTVNTEPPLQLTNNRIGIALDAPFDVIGGKLTLLAGHGLSIITEETSPLPGLVNTLVVLTGKGLGTDTTDNGGSIRVRVGEGGGLSFNEAGDLVAFNKKEDMRTLWTTPDPSPNCKIIEDKDSKLTLILTKCGSQILGSVSLLVVKGKFSNINNTTNPNEADKQITVKLLFDANGVLKQGSTMDSSYWNYRSDNSNLSQPYKKAVGFMPSKTAYPKQTKPTNKEISQAKNKIVSNVYLGGKIDQPCVIIISFNEEADSDYSIVFYFKWYKTYENVQFDSSSFNFSYIAQE.

This sequence belongs to the adenoviridae fiber family. In terms of assembly, homotrimer. Interacts with host receptor CXCAR. Interacts (via N-terminal tail region) with pentons.

The protein resides in the virion. It localises to the host nucleus. Its function is as follows. Forms spikes that protrude from each vertex of the icosahedral capsid. Interacts with host receptor CXCAR to provide virion initial attachment to target cell. Fiber proteins are shed during virus entry, when virus is still at the cell surface. This Homo sapiens (Human) protein is Fiber protein.